The primary structure comprises 744 residues: Prestin (744 aa).

Residues 1–75 (MDHAEENEIL…PITKWLPAYK (75 aa)) lie on the Cytoplasmic side of the membrane. Residues 76–105 (FKEYVLGDLVSGISTGVLQLPQGLAFAMLA) traverse the membrane as a helical segment. Residues 106 to 108 (AVP) lie on the Extracellular side of the membrane. The helical transmembrane segment at 109-126 (PIFGLYSSFYPVIMYCFL) threads the bilayer. The Cytoplasmic segment spans residues 127-137 (GTSRHISIGPF). The chain crosses the membrane as a helical span at residues 138–151 (AVISLMIGGVAVRL). Residues 152 to 168 (VPDDIVIPGGVNATNGT) lie on the Extracellular side of the membrane. Positions 158 to 168 (IPGGVNATNGT) match the Involved in motor function motif. N-linked (GlcNAc...) asparagine glycans are attached at residues asparagine 163 and asparagine 166. A helical transmembrane segment spans residues 169 to 196 (EARDALRVKVAMSVTLLSGIIQFCLGVC). Residues 197-206 (RFGFVAIYLT) are Cytoplasmic-facing. Residues 207–230 (EPLVRGFTTAAAVHVFTSMLKYLF) traverse the membrane as a helical segment. The Extracellular portion of the chain corresponds to 231 to 241 (GVKTKRYSGIF). The helical intramembrane region spans 242-253 (SVVYSTVAVLQN). Topologically, residues 254-258 (VKNLN) are extracellular. A helical transmembrane segment spans residues 259 to 282 (VCSLGVGLMVFGLLLGGKEFNERF). The Cytoplasmic portion of the chain corresponds to 283 to 291 (KEKLPAPIP). A helical transmembrane segment spans residues 292–307 (LEFFAVVMGTGISAGF). Topologically, residues 308–332 (NLKESYNVDVVGTLPLGLLPPANPD) are extracellular. A helical transmembrane segment spans residues 333–367 (TSLFHLVYVDAIAIAIVGFSVTISMAKTLANKHGY). Topologically, residues 368–370 (QVD) are cytoplasmic. The chain crosses the membrane as a helical span at residues 371-388 (GNQELIALGLCNSIGSLF). At 389 to 396 (QTFSISCS) the chain is on the extracellular side. A helical membrane pass occupies residues 397-406 (LSRSLVQEGT). Serine 398 is a binding site for salicylate. Residues 407-410 (GGKT) lie on the Cytoplasmic side of the membrane. Residues 411–432 (QLAGCLASLMILLVILATGFLF) traverse the membrane as a helical segment. Residues 433-436 (ESLP) lie on the Extracellular side of the membrane. A helical transmembrane segment spans residues 437 to 464 (QAVLSAIVIVNLKGMFMQFSDLPFFWRT). Residue serine 465 is a topological domain, cytoplasmic. A helical transmembrane segment spans residues 466–481 (KIELTIWLTTFVSSLF). The Extracellular portion of the chain corresponds to 482–483 (LG). The chain crosses the membrane as a helical span at residues 484 to 504 (LDYGLITAVIIALLTVIYRTQ). The segment at 505 to 718 (SPSYKVLGKL…AVLGSQLREA (214 aa)) is extended region for STAS domain. Residues 505-744 (SPSYKVLGKL…PNATPATPEA (240 aa)) lie on the Cytoplasmic side of the membrane. The region spanning 525–713 (AYEEVKEIPG…HSIHDAVLGS (189 aa)) is the STAS domain. A disordered region spans residues 718-744 (ALAEQEASAPPSQEDLEPNATPATPEA).

It belongs to the SLC26A/SulP transporter (TC 2.A.53) family. In terms of assembly, homodimer. Interacts (via STAS domain) with CALM; this interaction is calcium-dependent and the STAS domain interacts with only one lobe of CALM which is an elongated conformation. Interacts with MYH1.

The protein localises to the lateral cell membrane. It catalyses the reaction 2 hydrogencarbonate(in) + chloride(out) = 2 hydrogencarbonate(out) + chloride(in). Its function is as follows. Voltage-sensitive motor protein that drives outer hair cell (OHC) electromotility (eM) and participates in sound amplification in the hearing organ. Converts changes in the transmembrane electric potential into mechanical displacements resulting in the coupling of its expansion to movement of a charged voltage sensor across the lipid membrane. The nature of the voltage sensor is not completely clear, and two models compete. In the first model, acts as an incomplete transporter where intracellular chloride anion acts as extrinsic voltage sensor that drives conformational change in the protein which is sufficient to produce a length change in the plane of the membrane and hence in the length of the OHC. The second model in which multiple charged amino acid residues are distributed at the intracellular and extracellular membrane interfaces that form an intrinsic voltage sensor, whose movement produces the non-linear capacitance (NLC). However, the effective voltage sensor may be the result of a hybrid voltage sensor, assembled from intrinsic charge (charged residues) and extrinsic charge (bound anion). Notably, binding of anions to the anion-binding pocket partially neutralizes the intrinsic positive charge rather than to form an electrically negative sensor, therefore remaining charge may serve as voltage sensor that, after depolarization, moves from down (expanded state) to up (contracted) conformation, which is accompanied by an eccentric contraction of the intermembrane cross-sectional area of the protein as well as a major increase in the hydrophobic thickness of the protein having as consequences the plasma membrane thickening and the cell contraction after membrane depolarization. The anion-binding pocket transits from the inward-open (Down) state, where it is exposed toward the intracellular solvent in the absence of anion, to the occluded (Up) state upon anion binding. Salicylate competes for the anion-binding site and inhibits the voltage-sensor movement, and therefore inhibits the charge transfer and electromotility by displacing Cl(-) from the anion-binding site and by preventing the structural transitions to the contracted state. In addition, can act as a weak Cl(-)/HCO3(-) antiporter across the cell membrane and so regulate the intracellular pH of the outer hair cells (OHCs), while firstly found as being unable to mediate electrogenic anion transport. Moreover, supports a role in cardiac mechanical amplification serving as an elastic element to enhance the actomyosin- based sarcomere contraction system. The chain is Prestin from Homo sapiens (Human).